The following is a 306-amino-acid chain: UDP-N-acetylenolpyruvoylglucosamine reductase (306 aa).

Residues 34 to 199 form the FAD-binding PCMH-type domain; sequence RVGGPAQLLF…TSVRLRGAIA (166 aa). R179 is an active-site residue. S228 acts as the Proton donor in catalysis. E298 is an active-site residue.

Belongs to the MurB family. It depends on FAD as a cofactor.

It localises to the cytoplasm. The catalysed reaction is UDP-N-acetyl-alpha-D-muramate + NADP(+) = UDP-N-acetyl-3-O-(1-carboxyvinyl)-alpha-D-glucosamine + NADPH + H(+). It functions in the pathway cell wall biogenesis; peptidoglycan biosynthesis. In terms of biological role, cell wall formation. The chain is UDP-N-acetylenolpyruvoylglucosamine reductase from Rhodopseudomonas palustris (strain BisA53).